Reading from the N-terminus, the 223-residue chain is Small ribosomal subunit protein uS3 (223 aa).

One can recognise a KH type-2 domain in the interval 39-115 (IRKYIEKNLA…RVFINIVEIK (77 aa)).

This sequence belongs to the universal ribosomal protein uS3 family. In terms of assembly, part of the 30S ribosomal subunit. Forms a tight complex with proteins S10 and S14.

Functionally, binds the lower part of the 30S subunit head. Binds mRNA in the 70S ribosome, positioning it for translation. The polypeptide is Small ribosomal subunit protein uS3 (Leuconostoc mesenteroides subsp. mesenteroides (strain ATCC 8293 / DSM 20343 / BCRC 11652 / CCM 1803 / JCM 6124 / NCDO 523 / NBRC 100496 / NCIMB 8023 / NCTC 12954 / NRRL B-1118 / 37Y)).